The chain runs to 256 residues: Ciliary microtubule associated protein 1A (256 aa).

STPGR repeat units follow at residues proline 66–arginine 92, proline 181–arginine 206, and proline 217–arginine 242.

Belongs to the CIMAP family.

It is found in the cytoplasm. The protein localises to the cytoskeleton. The protein resides in the flagellum axoneme. Its function is as follows. Outer dense fibers are filamentous structures located on the outside of the axoneme in the midpiece and principal piece of the mammalian sperm tail. May help to maintain the passive elastic structures and elastic recoil of the sperm tail. The polypeptide is Ciliary microtubule associated protein 1A (cimap1a) (Xenopus tropicalis (Western clawed frog)).